Consider the following 59-residue polypeptide: Transcription elongation factor Spt4 (59 aa).

4 residues coordinate Zn(2+): C4, C7, C16, and C19.

It belongs to the archaeal Spt4 family. As to quaternary structure, heterodimer composed of Spt4 and Spt5.

Stimulates transcription elongation. This is Transcription elongation factor Spt4 from Methanocaldococcus jannaschii (strain ATCC 43067 / DSM 2661 / JAL-1 / JCM 10045 / NBRC 100440) (Methanococcus jannaschii).